A 315-amino-acid polypeptide reads, in one-letter code: Aspartate carbamoyltransferase catalytic subunit (315 aa).

2 residues coordinate carbamoyl phosphate: arginine 65 and threonine 66. Lysine 93 is an L-aspartate binding site. Positions 115, 145, and 148 each coordinate carbamoyl phosphate. Residues arginine 179 and arginine 234 each contribute to the L-aspartate site. 2 residues coordinate carbamoyl phosphate: glycine 275 and proline 276.

This sequence belongs to the aspartate/ornithine carbamoyltransferase superfamily. ATCase family. In terms of assembly, heterododecamer (2C3:3R2) of six catalytic PyrB chains organized as two trimers (C3), and six regulatory PyrI chains organized as three dimers (R2).

It carries out the reaction carbamoyl phosphate + L-aspartate = N-carbamoyl-L-aspartate + phosphate + H(+). It functions in the pathway pyrimidine metabolism; UMP biosynthesis via de novo pathway; (S)-dihydroorotate from bicarbonate: step 2/3. Functionally, catalyzes the condensation of carbamoyl phosphate and aspartate to form carbamoyl aspartate and inorganic phosphate, the committed step in the de novo pyrimidine nucleotide biosynthesis pathway. This is Aspartate carbamoyltransferase catalytic subunit from Xanthomonas campestris pv. campestris (strain 8004).